We begin with the raw amino-acid sequence, 229 residues long: Uracil-DNA glycosylase (229 aa).

The active-site Proton acceptor is D65.

Belongs to the uracil-DNA glycosylase (UDG) superfamily. UNG family.

The protein resides in the cytoplasm. The enzyme catalyses Hydrolyzes single-stranded DNA or mismatched double-stranded DNA and polynucleotides, releasing free uracil.. Functionally, excises uracil residues from the DNA which can arise as a result of misincorporation of dUMP residues by DNA polymerase or due to deamination of cytosine. This Brevibacillus brevis (strain 47 / JCM 6285 / NBRC 100599) protein is Uracil-DNA glycosylase.